Consider the following 574-residue polypeptide: Membrane protein insertase YidC (574 aa).

Residues 6–26 traverse the membrane as a helical segment; that stretch reads VFLIFAWLMVAALLWMEWGKD. The tract at residues 45–77 is disordered; the sequence is RDPDAAAPSAANVPSAQPIPQAGAPGTVPATSS. 5 helical membrane passes run 356-376, 380-400, 447-467, 489-509, and 525-545; these read FSIM…LHSF, WGWA…PLSA, GGCL…WVLV, PYFI…KLTP, and PLVF…YWVV.

Belongs to the OXA1/ALB3/YidC family. Type 1 subfamily. As to quaternary structure, interacts with the Sec translocase complex via SecD. Specifically interacts with transmembrane segments of nascent integral membrane proteins during membrane integration.

It is found in the cell inner membrane. Its function is as follows. Required for the insertion and/or proper folding and/or complex formation of integral membrane proteins into the membrane. Involved in integration of membrane proteins that insert both dependently and independently of the Sec translocase complex, as well as at least some lipoproteins. Aids folding of multispanning membrane proteins. The polypeptide is Membrane protein insertase YidC (Xanthomonas euvesicatoria pv. vesicatoria (strain 85-10) (Xanthomonas campestris pv. vesicatoria)).